Here is a 217-residue protein sequence, read N- to C-terminus: Frizzled-8 (217 aa).

The Extracellular portion of the chain corresponds to 1–26 (AGAAELQPELAVAEHVRYESTGPALC). Residues 27–47 (TVVFLLVYFFGMASSIWWVIL) traverse the membrane as a helical segment. The Cytoplasmic segment spans residues 48–69 (SLTWFLAAGMKWGNEAIAGYAQ). Residues 70–90 (YFHLAAWLLPSVKSIAVLALS) form a helical membrane-spanning segment. Residues 91–113 (SVDGDPVAGICYVGNQSLENLRG) lie on the Extracellular side of the membrane. Asn-105 carries an N-linked (GlcNAc...) asparagine glycan. A helical membrane pass occupies residues 114–134 (FVLAPLVVYLFTGSLFLLAGF). Topologically, residues 135 to 160 (VSLFRIRSVIKQGGTKTDKLEKLMIR) are cytoplasmic. A helical membrane pass occupies residues 161–181 (IGIFTVLYTVPATIVIACYIY). The Extracellular segment spans residues 182-209 (EQHNREAWEQAQNCSCPGDPHRPKPDYA). N-linked (GlcNAc...) asparagine glycosylation occurs at Asn-194. Residues 210 to 217 (VFMLKYFM) form a helical membrane-spanning segment.

It belongs to the G-protein coupled receptor Fz/Smo family.

The protein resides in the membrane. It is found in the cell membrane. Receptor for Wnt proteins. Most of frizzled receptors are coupled to the beta-catenin canonical signaling pathway, which leads to the activation of disheveled proteins, inhibition of GSK-3 kinase, nuclear accumulation of beta-catenin and activation of Wnt target genes. A second signaling pathway involving PKC and calcium fluxes has been seen for some family members, but it is not yet clear if it represents a distinct pathway or if it can be integrated in the canonical pathway, as PKC seems to be required for Wnt-mediated inactivation of GSK-3 kinase. Both pathways seem to involve interactions with G-proteins. May be involved in transduction and intercellular transmission of polarity information during tissue morphogenesis and/or in differentiated tissues. The sequence is that of Frizzled-8 (FZD8) from Gallus gallus (Chicken).